The chain runs to 244 residues: Inactive chemokine-binding protein (244 aa).

The segment at 1 to 79 (MHVPASLQQS…STSVEDVDPP (79 aa)) is disordered. Polar residues predominate over residues 37 to 53 (QDQTPTNDKICQSVTEI). Residues 54–77 (TESESDPDPEVESEDDSTSVEDVD) show a composition bias toward acidic residues.

Belongs to the orthopoxvirus OPG001 family.

The protein localises to the host cytoplasm. Its function is as follows. The protein is truncated in this vaccinal strain and presumably inactive, because the lack of signal peptide prevents the protein of being secreted. In the other strains inhibits host immune defense by binding to host chemokines. Binds host CC chemokines (beta chemokines) such as RANTES with high affinity, but not CXC or C chemokines (alpha and gamma chemokines). The polypeptide is Inactive chemokine-binding protein (OPG001) (Vaccinia virus (strain Copenhagen) (VACV)).